The primary structure comprises 503 residues: Probable cytochrome P450 6a19 (503 aa).

Cys-445 lines the heme pocket.

This sequence belongs to the cytochrome P450 family. Heme is required as a cofactor.

It is found in the endoplasmic reticulum membrane. It localises to the microsome membrane. May be involved in the metabolism of insect hormones and in the breakdown of synthetic insecticides. This Drosophila melanogaster (Fruit fly) protein is Probable cytochrome P450 6a19 (Cyp6a19).